Here is a 354-residue protein sequence, read N- to C-terminus: UPF0283 membrane protein plu2581 (354 aa).

3 consecutive transmembrane segments (helical) span residues 71–91 (MVYG…VQWI), 101–121 (SALG…GSLV), and 214–234 (ESAL…FIAW).

Belongs to the UPF0283 family.

Its subcellular location is the cell inner membrane. This is UPF0283 membrane protein plu2581 from Photorhabdus laumondii subsp. laumondii (strain DSM 15139 / CIP 105565 / TT01) (Photorhabdus luminescens subsp. laumondii).